A 239-amino-acid chain; its full sequence is MLHYKRILLKLSGESLAGEDGYGINAGVLDQYAEEISEARDMGAQIALVIGGGNIFRGVSQAAANMDRVQADYMGMLATVINSLAFQDALERKGVFTRLLTAISMEQIAEPFIRRRAIRHLEKGRVVIFGAGTGNPYFTTDTAASLRAIEIEADIIVKGTRVDGIYDSDPEKNANAQFFPDISYLDVFHKKLGVMDMTAITLCSENSLPIVVMNMNEKGNLSRLLRGEKVGSLVHHEGV.

Residue 10–13 participates in ATP binding; that stretch reads KLSG. The tract at residues 18 to 23 is involved in allosteric activation by GTP; sequence GEDGYG. Gly52 contacts UMP. Positions 53 and 57 each coordinate ATP. UMP is bound by residues Asp72 and 133-140; that span reads TGNPYFTT. ATP contacts are provided by Thr160, Tyr166, and Asp169.

The protein belongs to the UMP kinase family. As to quaternary structure, homohexamer.

It localises to the cytoplasm. It carries out the reaction UMP + ATP = UDP + ADP. It participates in pyrimidine metabolism; CTP biosynthesis via de novo pathway; UDP from UMP (UMPK route): step 1/1. With respect to regulation, allosterically activated by GTP. Inhibited by UTP. Functionally, catalyzes the reversible phosphorylation of UMP to UDP. The chain is Uridylate kinase from Chlorobium chlorochromatii (strain CaD3).